The sequence spans 182 residues: Bis(5'-nucleosyl)-tetraphosphatase [asymmetrical] (182 aa).

Residues 3 to 110 (KQLYFSKFPV…IPRKKADFSE (108 aa)) enclose the HIT domain. Substrate contacts are provided by residues Asn28, Gln84, and 90 to 93 (GQTV). The Histidine triad motif signature appears at 95–99 (HVHVH). Residue His97 is the Tele-AMP-histidine intermediate of the active site. His99 serves as a coordination point for substrate. Positions 135 to 161 (RYAGDERPPTSMRQAIPKDEDRKPRTL) are disordered. Over residues 150–161 (IPKDEDRKPRTL) the composition is skewed to basic and acidic residues.

It catalyses the reaction P(1),P(4)-bis(5'-guanosyl) tetraphosphate + H2O = GMP + GTP + 2 H(+). Functionally, asymmetrically hydrolyzes Ap4A to yield AMP and ATP. The sequence is that of Bis(5'-nucleosyl)-tetraphosphatase [asymmetrical] (aph1) from Schizosaccharomyces pombe (strain 972 / ATCC 24843) (Fission yeast).